The primary structure comprises 324 residues: Glyoxylate/hydroxypyruvate reductase B (324 aa).

Active-site residues include Arg237 and Glu266. His285 functions as the Proton donor in the catalytic mechanism.

This sequence belongs to the D-isomer specific 2-hydroxyacid dehydrogenase family. GhrB subfamily. Homodimer.

The protein resides in the cytoplasm. The catalysed reaction is glycolate + NADP(+) = glyoxylate + NADPH + H(+). It catalyses the reaction (R)-glycerate + NAD(+) = 3-hydroxypyruvate + NADH + H(+). The enzyme catalyses (R)-glycerate + NADP(+) = 3-hydroxypyruvate + NADPH + H(+). In terms of biological role, catalyzes the NADPH-dependent reduction of glyoxylate and hydroxypyruvate into glycolate and glycerate, respectively. The polypeptide is Glyoxylate/hydroxypyruvate reductase B (Enterobacter sp. (strain 638)).